The primary structure comprises 239 residues: ATP-dependent dethiobiotin synthetase BioD (239 aa).

ATP is bound at residue 15–20; it reads EIGKTF. Position 19 (Thr-19) interacts with Mg(2+). Residue Lys-40 is part of the active site. ATP contacts are provided by residues Asp-57, 118 to 121, 178 to 179, and 211 to 213; these read EGVG, NH, and AHL. Mg(2+) contacts are provided by Asp-57 and Glu-118.

Belongs to the dethiobiotin synthetase family. As to quaternary structure, homodimer. Requires Mg(2+) as cofactor.

Its subcellular location is the cytoplasm. It catalyses the reaction (7R,8S)-7,8-diammoniononanoate + CO2 + ATP = (4R,5S)-dethiobiotin + ADP + phosphate + 3 H(+). Its pathway is cofactor biosynthesis; biotin biosynthesis; biotin from 7,8-diaminononanoate: step 1/2. Functionally, catalyzes a mechanistically unusual reaction, the ATP-dependent insertion of CO2 between the N7 and N8 nitrogen atoms of 7,8-diaminopelargonic acid (DAPA, also called 7,8-diammoniononanoate) to form a ureido ring. This Burkholderia ambifaria (strain MC40-6) protein is ATP-dependent dethiobiotin synthetase BioD.